The sequence spans 497 residues: Proline--tRNA ligase (497 aa).

Belongs to the class-II aminoacyl-tRNA synthetase family. ProS type 3 subfamily. In terms of assembly, homodimer.

The protein resides in the cytoplasm. It carries out the reaction tRNA(Pro) + L-proline + ATP = L-prolyl-tRNA(Pro) + AMP + diphosphate. Functionally, catalyzes the attachment of proline to tRNA(Pro) in a two-step reaction: proline is first activated by ATP to form Pro-AMP and then transferred to the acceptor end of tRNA(Pro). The sequence is that of Proline--tRNA ligase from Bacteroides fragilis (strain ATCC 25285 / DSM 2151 / CCUG 4856 / JCM 11019 / LMG 10263 / NCTC 9343 / Onslow / VPI 2553 / EN-2).